The primary structure comprises 595 residues: Beta-hexosaminidase 1 (595 aa).

An N-terminal signal peptide occupies residues 1–20 (MRFAYLATLAGSLLAGLAQA). A glycan (N-linked (GlcNAc...) asparagine) is linked at Asn313.

The protein belongs to the glycosyl hydrolase 20 family.

It catalyses the reaction Hydrolysis of terminal non-reducing N-acetyl-D-hexosamine residues in N-acetyl-beta-D-hexosaminides.. Its function is as follows. Beta-hexosaminidase that shows a broad substrate specificity. The sequence is that of Beta-hexosaminidase 1 from Coccidioides posadasii (strain RMSCC 757 / Silveira) (Valley fever fungus).